A 228-amino-acid chain; its full sequence is Sugar fermentation stimulation protein homolog (228 aa).

Belongs to the SfsA family.

The sequence is that of Sugar fermentation stimulation protein homolog from Desulfitobacterium hafniense (strain DSM 10664 / DCB-2).